A 112-amino-acid chain; its full sequence is MAPTKKAKKSGENINNKLQLVMKSGKYTLGYKTVLKTLRSSLGKLIILANNCPPLRKSEIETYAMLAKISVHHFHGNNVDLGTACGKYYRVCCLSILDPGDSDIISTTTTTQ.

It belongs to the eukaryotic ribosomal protein eL30 family. As to expression, expressed in roots and leaves.

In Triticum aestivum (Wheat), this protein is Large ribosomal subunit protein eL30.